The chain runs to 453 residues: Homeobox protein meis3 (453 aa).

The tract at residues 33-64 (HHSLSQSAPYGSTGAAHRVPMPPGMGSNDGLK) is disordered. The MEIS N-terminal domain occupies 102-185 (GGDVCSSDSF…PIDLVIDDRD (84 aa)). Residues 192-272 (LEDFTGSCTS…RDKKRNKKRG (81 aa)) are disordered. The segment covering 197–209 (GSCTSLSDQNNSW) has biased composition (polar residues). Positions 218–230 (STHSGTPGPSSGG) are enriched in low complexity. Residues 231 to 242 (LASQSGDNSSEQ) are compositionally biased toward polar residues. Residues 267 to 329 (RNKKRGIFPK…NARRRIVQPM (63 aa)) constitute a DNA-binding region (homeobox).

Belongs to the TALE/MEIS homeobox family.

It localises to the nucleus. A caudalizing protein which is required to pattern the anterior/posterior (A/P) axis during central nervous system (CNS) formation. Inhibits anterior neural expression and acts as a transcriptional activator to induce posterior neural gene expression. Maintains a proper A/P balance required for hindbrain formation by activating the FGF/MAPK pathway, which modulates the planar cell polarity (PCP) pathway. Interacts with retinoid signaling during hindbrain patterning. In Xenopus tropicalis (Western clawed frog), this protein is Homeobox protein meis3.